We begin with the raw amino-acid sequence, 357 residues long: uncharacterized protein (357 aa).

9 consecutive transmembrane segments (helical) span residues 13–33, 44–64, 72–92, 148–168, 181–201, 203–223, 266–286, 293–313, and 327–347; these read PVTG…TYLV, IACT…CAVY, VSTF…TCFL, VLTY…FCFV, LPIS…SGFF, YLFI…LGIW, IALT…SALF, SISG…PFLI, and YWVL…VVLL.

It is found in the mitochondrion membrane. This is an uncharacterized protein from Schizosaccharomyces pombe (strain 972 / ATCC 24843) (Fission yeast).